A 374-amino-acid chain; its full sequence is tRNA (guanine(26)-N(2))-dimethyltransferase (374 aa).

Positions 1 to 367 constitute a Trm1 methyltransferase domain; it reads MILKEGEVVF…ATLKNVIEAI (367 aa). Residues Arg34, Arg66, Asp86, Asp113, and Ala114 each coordinate S-adenosyl-L-methionine.

The protein belongs to the class I-like SAM-binding methyltransferase superfamily. Trm1 family.

The enzyme catalyses guanosine(26) in tRNA + 2 S-adenosyl-L-methionine = N(2)-dimethylguanosine(26) in tRNA + 2 S-adenosyl-L-homocysteine + 2 H(+). Its function is as follows. Dimethylates a single guanine residue at position 26 of a number of tRNAs using S-adenosyl-L-methionine as donor of the methyl groups. This Methanocaldococcus jannaschii (strain ATCC 43067 / DSM 2661 / JAL-1 / JCM 10045 / NBRC 100440) (Methanococcus jannaschii) protein is tRNA (guanine(26)-N(2))-dimethyltransferase.